A 581-amino-acid chain; its full sequence is Proline--tRNA ligase (581 aa).

It belongs to the class-II aminoacyl-tRNA synthetase family. ProS type 1 subfamily. Homodimer.

The protein localises to the cytoplasm. The enzyme catalyses tRNA(Pro) + L-proline + ATP = L-prolyl-tRNA(Pro) + AMP + diphosphate. In terms of biological role, catalyzes the attachment of proline to tRNA(Pro) in a two-step reaction: proline is first activated by ATP to form Pro-AMP and then transferred to the acceptor end of tRNA(Pro). As ProRS can inadvertently accommodate and process non-cognate amino acids such as alanine and cysteine, to avoid such errors it has two additional distinct editing activities against alanine. One activity is designated as 'pretransfer' editing and involves the tRNA(Pro)-independent hydrolysis of activated Ala-AMP. The other activity is designated 'posttransfer' editing and involves deacylation of mischarged Ala-tRNA(Pro). The misacylated Cys-tRNA(Pro) is not edited by ProRS. In Leptothrix cholodnii (strain ATCC 51168 / LMG 8142 / SP-6) (Leptothrix discophora (strain SP-6)), this protein is Proline--tRNA ligase.